The chain runs to 143 residues: Large ribosomal subunit protein uL11 (143 aa).

It belongs to the universal ribosomal protein uL11 family. As to quaternary structure, part of the ribosomal stalk of the 50S ribosomal subunit. Interacts with L10 and the large rRNA to form the base of the stalk. L10 forms an elongated spine to which L12 dimers bind in a sequential fashion forming a multimeric L10(L12)X complex. In terms of processing, one or more lysine residues are methylated.

Its function is as follows. Forms part of the ribosomal stalk which helps the ribosome interact with GTP-bound translation factors. This chain is Large ribosomal subunit protein uL11, found in Variovorax paradoxus (strain S110).